A 124-amino-acid polypeptide reads, in one-letter code: Small ribosomal subunit protein uS12 (124 aa).

At Asp89 the chain carries 3-methylthioaspartic acid.

This sequence belongs to the universal ribosomal protein uS12 family. In terms of assembly, part of the 30S ribosomal subunit. Contacts proteins S8 and S17. May interact with IF1 in the 30S initiation complex.

Its function is as follows. With S4 and S5 plays an important role in translational accuracy. Functionally, interacts with and stabilizes bases of the 16S rRNA that are involved in tRNA selection in the A site and with the mRNA backbone. Located at the interface of the 30S and 50S subunits, it traverses the body of the 30S subunit contacting proteins on the other side and probably holding the rRNA structure together. The combined cluster of proteins S8, S12 and S17 appears to hold together the shoulder and platform of the 30S subunit. The chain is Small ribosomal subunit protein uS12 (rpsL) from Mannheimia haemolytica (Pasteurella haemolytica).